A 676-amino-acid polypeptide reads, in one-letter code: MIPPHRCLTDPLLQGSWPGYLPPMPKRARRMRLTTWRSPVTAVIAALLAAFLTPAAAHGAPRESAPVYSYENAIRESVWVDTRLDGDGDGKTDRVAVDVVRPRELARQGRKIPVIMDASPYYSCCGRGNESQKKTYDANGDVVRMPLFYDNYFVPRGYAFVGVDLAGTNRSDGCVDVGGRSDIQSAKAVIDWLNGRAHGYTSRTGTARAKATWTNGRTGMIGKSWDGTVANGVAATGVKGLKTIVPISAISSWYDYYFAKGAPLYDSGPDWLSDYVDSPDARTKCAAVQRKLVDEAPRTGDWTSLWTERDYVKDASKVRASVFLVHGMQDLNVRAKNFGQWWSALAKNGVERKIWLSQTGHVDPFDFRRTAWVDTLHRWFDHELLGYDNGVDREPTADIERHPDQWVTSTLWPPRGTDAVTLRPGTGTQAGVGTLGLRTGSGTETFTDDPRLSETDWAAHIDESTASKAGFVTAPLAGDVRLSGSSKVTVTATPTTSTAHLSAVLVDLGPDTIRDYADGGEGITTLTDRTCWGASTAGDSACFKNTRATTAAVDYTVLSRGWADLGNHASARKGVPLTPGKAYTITLDLAATDHVVPKGHRLALIVAGTDKDLIDPPSSTPTLTLDLARTSARVPLVGGAAAFTRATAQSGTAADATVLDGVREPHTAHRVPGGGL.

Residues serine 224, aspartate 330, and histidine 361 each act as charge relay system in the active site. The interval 423-450 (RPGTGTQAGVGTLGLRTGSGTETFTDDP) is disordered.

Belongs to the peptidase S15 family.

It carries out the reaction Hydrolyzes Xaa-Pro-|- bonds to release unblocked, N-terminal dipeptides from substrates including Ala-Pro-|-p-nitroanilide and (sequentially) Tyr-Pro-|-Phe-Pro-|-Gly-Pro-|-Ile.. The polypeptide is Putative Xaa-Pro dipeptidyl-peptidase (Streptomyces avermitilis (strain ATCC 31267 / DSM 46492 / JCM 5070 / NBRC 14893 / NCIMB 12804 / NRRL 8165 / MA-4680)).